The following is a 138-amino-acid chain: Acidic phospholipase A2 Ts-A1 (138 aa).

Residues 1-16 (MRTLWIMAVLQVGVEG) form the signal peptide. 7 disulfide bridges follow: C42–C131, C44–C60, C59–C111, C65–C138, C66–C104, C73–C97, and C91–C102. Ca(2+) is bound by residues F43, G45, and G47. H63 is a catalytic residue. Ca(2+) is bound at residue D64. The active site involves D105.

The cofactor is Ca(2+). In terms of tissue distribution, expressed by the venom gland.

The protein resides in the secreted. It carries out the reaction a 1,2-diacyl-sn-glycero-3-phosphocholine + H2O = a 1-acyl-sn-glycero-3-phosphocholine + a fatty acid + H(+). In terms of biological role, snake venom phospholipase A2 (PLA2) that shows a moderate inhibition of ADP-induced human platelet aggregation when tested on platelet rich plasma. Exhibits high hydrolytic activities and prefers the anionic micelles (dPPC with deoxycholate) to the zwitterionic micelles (dPPC with Triton X-100). PLA2 catalyzes the calcium-dependent hydrolysis of the 2-acyl groups in 3-sn-phosphoglycerides. This Trimeresurus stejnegeri (Chinese green tree viper) protein is Acidic phospholipase A2 Ts-A1.